The sequence spans 137 residues: MPNPAELAAHHWGFAAFLLGVVGLLAFMLGVSALLGSKAFGRSKNEPFESGIVPTGGARLRLSAKFYLVAMLFVIFDVEALFLFAWSVSVRESGWAGLIEATIFIAILLAGLVYLWRIGALDWAPESRRKRQAKLKQ.

The next 3 helical transmembrane spans lie at 14 to 34, 66 to 86, and 95 to 115; these read FAAF…VSAL, FYLV…LFAW, and WAGL…LVYL.

This sequence belongs to the complex I subunit 3 family. In terms of assembly, NDH-1 is composed of 13 different subunits. Subunits NuoA, H, J, K, L, M, N constitute the membrane sector of the complex.

The protein resides in the cell inner membrane. It catalyses the reaction a quinone + NADH + 5 H(+)(in) = a quinol + NAD(+) + 4 H(+)(out). In terms of biological role, NDH-1 shuttles electrons from NADH, via FMN and iron-sulfur (Fe-S) centers, to quinones in the respiratory chain. The immediate electron acceptor for the enzyme in this species is believed to be ubiquinone. Couples the redox reaction to proton translocation (for every two electrons transferred, four hydrogen ions are translocated across the cytoplasmic membrane), and thus conserves the redox energy in a proton gradient. In Pseudomonas paraeruginosa (strain DSM 24068 / PA7) (Pseudomonas aeruginosa (strain PA7)), this protein is NADH-quinone oxidoreductase subunit A 1.